The sequence spans 241 residues: Probable transcriptional regulatory protein NE0210 (241 aa).

The protein belongs to the TACO1 family.

It is found in the cytoplasm. The protein is Probable transcriptional regulatory protein NE0210 of Nitrosomonas europaea (strain ATCC 19718 / CIP 103999 / KCTC 2705 / NBRC 14298).